A 296-amino-acid polypeptide reads, in one-letter code: 5,10-methylenetetrahydrofolate reductase (296 aa).

The Proton donor/acceptor role is filled by glutamate 28. NADH is bound at residue threonine 59. Positions 60, 62, 88, 118, 119, 120, 132, 152, 156, 159, 165, 168, 171, and 172 each coordinate FAD. Aspartate 120 provides a ligand contact to (6S)-5-methyl-5,6,7,8-tetrahydrofolate. Glutamine 183 contacts NADH. Positions 183, 219, and 279 each coordinate (6S)-5-methyl-5,6,7,8-tetrahydrofolate.

Belongs to the methylenetetrahydrofolate reductase family. The cofactor is FAD.

The enzyme catalyses (6S)-5-methyl-5,6,7,8-tetrahydrofolate + NAD(+) = (6R)-5,10-methylene-5,6,7,8-tetrahydrofolate + NADH + H(+). The protein operates within one-carbon metabolism; tetrahydrofolate interconversion. Its pathway is amino-acid biosynthesis; L-methionine biosynthesis via de novo pathway. Functionally, catalyzes the NADH-dependent reduction of 5,10-methylenetetrahydrofolate to 5-methyltetrahydrofolate. Is required to provide the methyl group necessary for methionine synthetase to convert homocysteine to methionine; the methyl group is given by 5-methyltetrahydrofolate. The sequence is that of 5,10-methylenetetrahydrofolate reductase (metF) from Salmonella typhimurium (strain LT2 / SGSC1412 / ATCC 700720).